The following is a 400-amino-acid chain: Aspartate/prephenate aminotransferase (400 aa).

Glycine 39, tryptophan 125, and asparagine 175 together coordinate L-aspartate. Lysine 239 carries the post-translational modification N6-(pyridoxal phosphate)lysine. Residue arginine 375 participates in L-aspartate binding.

The protein belongs to the class-I pyridoxal-phosphate-dependent aminotransferase family. In terms of assembly, homodimer. The cofactor is pyridoxal 5'-phosphate.

The protein resides in the cytoplasm. The enzyme catalyses L-aspartate + 2-oxoglutarate = oxaloacetate + L-glutamate. The catalysed reaction is L-arogenate + 2-oxoglutarate = prephenate + L-glutamate. Functionally, catalyzes the reversible conversion of aspartate and 2-oxoglutarate to glutamate and oxaloacetate. Can also transaminate prephenate in the presence of glutamate. The sequence is that of Aspartate/prephenate aminotransferase from Cereibacter sphaeroides (strain ATCC 17029 / ATH 2.4.9) (Rhodobacter sphaeroides).